Consider the following 321-residue polypeptide: Ubiquinone biosynthesis O-methyltransferase, mitochondrial (321 aa).

S-adenosyl-L-methionine is bound by residues Arg102, Gly135, Asp157, and Leu210. Mg(2+) is bound by residues Glu211, Glu214, and His215.

It belongs to the class I-like SAM-binding methyltransferase superfamily. UbiG/COQ3 family. In terms of assembly, component of a multi-subunit COQ enzyme complex. It depends on Mg(2+) as a cofactor.

The protein localises to the mitochondrion inner membrane. It carries out the reaction a 3,4-dihydroxy-5-(all-trans-polyprenyl)benzoate + S-adenosyl-L-methionine = a 4-hydroxy-3-methoxy-5-(all-trans-polyprenyl)benzoate + S-adenosyl-L-homocysteine + H(+). The catalysed reaction is a 3-demethylubiquinone + S-adenosyl-L-methionine = a ubiquinone + S-adenosyl-L-homocysteine. The enzyme catalyses a 3-demethylubiquinol + S-adenosyl-L-methionine = a ubiquinol + S-adenosyl-L-homocysteine + H(+). Its pathway is cofactor biosynthesis; ubiquinone biosynthesis. Functionally, O-methyltransferase required for two non-consecutive steps during ubiquinone biosynthesis. Catalyzes the 2 O-methylation of 3,4-dihydroxy-5-(all-trans-polyprenyl)benzoic acid into 4-hydroxy-3-methoxy-5-(all-trans-polyprenyl)benzoic acid. Also catalyzes the last step of ubiquinone biosynthesis by mediating methylation of 3-demethylubiquinone into ubiquinone. Also able to mediate the methylation of 3-demethylubiquinol into ubiquinol. In Dictyostelium discoideum (Social amoeba), this protein is Ubiquinone biosynthesis O-methyltransferase, mitochondrial.